We begin with the raw amino-acid sequence, 649 residues long: Glucan endo-1,3-beta-glucosidase btgC (649 aa).

Disordered regions lie at residues 1-50 (MGDR…AHTH) and 110-224 (YHTT…AGGA). The Cytoplasmic portion of the chain corresponds to 1–274 (MGDRSEQYGD…PRPSGASRKR (274 aa)). Over residues 144-157 (GSSAALSAAGAPAG) the composition is skewed to low complexity. Residues 198–208 (NPDDILDDGDD) show a composition bias toward acidic residues. Residues 275 to 295 (GWIIGGILAFIVIGAIVGGAV) traverse the membrane as a helical; Signal-anchor for type II membrane protein segment. The Extracellular portion of the chain corresponds to 296-649 (GGTLGNRRSE…IPDCGGKTAA (354 aa)). Positions 301–329 (NRRSETASESSEVSADDDTETNGDLDKNS) are disordered. Acidic residues predominate over residues 314–323 (SADDDTETNG). N369, N392, and N420 each carry an N-linked (GlcNAc...) asparagine glycan. Residue E452 is the Proton donor of the active site. E551 acts as the Nucleophile in catalysis. N596 is a glycosylation site (N-linked (GlcNAc...) asparagine).

Belongs to the glycosyl hydrolase 17 family.

The protein localises to the cell membrane. It catalyses the reaction Hydrolysis of (1-&gt;3)-beta-D-glucosidic linkages in (1-&gt;3)-beta-D-glucans.. In terms of biological role, glucanases play a role in cell expansion during growth, in cell-cell fusion during mating, and in spore release during sporulation. This enzyme may be involved in beta-glucan degradation. Active on laminarin and lichenan. This chain is Glucan endo-1,3-beta-glucosidase btgC (btgC), found in Emericella nidulans (strain FGSC A4 / ATCC 38163 / CBS 112.46 / NRRL 194 / M139) (Aspergillus nidulans).